A 106-amino-acid polypeptide reads, in one-letter code: Large ribosomal subunit protein bL21 (106 aa).

It belongs to the bacterial ribosomal protein bL21 family. Part of the 50S ribosomal subunit. Contacts protein L20.

Functionally, this protein binds to 23S rRNA in the presence of protein L20. In Dichelobacter nodosus (strain VCS1703A), this protein is Large ribosomal subunit protein bL21.